Reading from the N-terminus, the 368-residue chain is NAD(P)H-quinone oxidoreductase subunit 1, chloroplastic (368 aa).

Transmembrane regions (helical) follow at residues 27–47 (FLWI…GVLV), 97–117 (WLFN…YLVI), 130–150 (IGVF…LMAG), 166–186 (AAQS…IALL), 204–224 (FLSW…IASL), 249–269 (YSGM…LVSS), 270–290 (LFVT…FSLF), 305–325 (VISI…FLFI), and 348–368 (FLLP…LFLL).

Belongs to the complex I subunit 1 family. As to quaternary structure, NDH is composed of at least 16 different subunits, 5 of which are encoded in the nucleus.

Its subcellular location is the plastid. The protein localises to the chloroplast thylakoid membrane. It carries out the reaction a plastoquinone + NADH + (n+1) H(+)(in) = a plastoquinol + NAD(+) + n H(+)(out). The enzyme catalyses a plastoquinone + NADPH + (n+1) H(+)(in) = a plastoquinol + NADP(+) + n H(+)(out). NDH shuttles electrons from NAD(P)H:plastoquinone, via FMN and iron-sulfur (Fe-S) centers, to quinones in the photosynthetic chain and possibly in a chloroplast respiratory chain. The immediate electron acceptor for the enzyme in this species is believed to be plastoquinone. Couples the redox reaction to proton translocation, and thus conserves the redox energy in a proton gradient. This Marchantia polymorpha (Common liverwort) protein is NAD(P)H-quinone oxidoreductase subunit 1, chloroplastic.